A 392-amino-acid polypeptide reads, in one-letter code: 6-aminohexanoate-dimer hydrolase (392 aa).

The segment at 1-22 (MNARSTGQHPARYPGAAAGEPT) is disordered. Ser-112 is a catalytic residue.

It catalyses the reaction [N-(6-aminohexanoyl)](n) + H2O = [N-(6-aminohexanoyl)](n-1) + 6-aminohexanoate. The enzyme catalyses N-(6-aminohexanoyl)-6-aminohexanoate + H2O = 2 6-aminohexanoate. The protein operates within xenobiotic degradation; nylon-6 oligomer degradation. Its function is as follows. Involved in nylon oligomer degradation. In Paenarthrobacter ureafaciens, this protein is 6-aminohexanoate-dimer hydrolase.